We begin with the raw amino-acid sequence, 495 residues long: UDP-N-acetylmuramoyl-L-alanyl-D-glutamate--2,6-diaminopimelate ligase (495 aa).

UDP-N-acetyl-alpha-D-muramoyl-L-alanyl-D-glutamate-binding positions include Leu27, Ser29, and 44–46 (HQA). 116–122 (GTNGKTT) contributes to the ATP binding site. UDP-N-acetyl-alpha-D-muramoyl-L-alanyl-D-glutamate is bound by residues Asn157, 158-159 (TT), Ser185, Gln191, and Arg193. At Lys225 the chain carries N6-carboxylysine. Meso-2,6-diaminopimelate is bound by residues Arg390, 414 to 417 (DNPR), Gly465, and Glu469. The Meso-diaminopimelate recognition motif motif lies at 414–417 (DNPR).

This sequence belongs to the MurCDEF family. MurE subfamily. The cofactor is Mg(2+). Post-translationally, carboxylation is probably crucial for Mg(2+) binding and, consequently, for the gamma-phosphate positioning of ATP.

The protein resides in the cytoplasm. It carries out the reaction UDP-N-acetyl-alpha-D-muramoyl-L-alanyl-D-glutamate + meso-2,6-diaminopimelate + ATP = UDP-N-acetyl-alpha-D-muramoyl-L-alanyl-gamma-D-glutamyl-meso-2,6-diaminopimelate + ADP + phosphate + H(+). Its pathway is cell wall biogenesis; peptidoglycan biosynthesis. Functionally, catalyzes the addition of meso-diaminopimelic acid to the nucleotide precursor UDP-N-acetylmuramoyl-L-alanyl-D-glutamate (UMAG) in the biosynthesis of bacterial cell-wall peptidoglycan. The protein is UDP-N-acetylmuramoyl-L-alanyl-D-glutamate--2,6-diaminopimelate ligase of Salmonella paratyphi A (strain ATCC 9150 / SARB42).